The sequence spans 400 residues: CinA-like protein (400 aa).

The protein belongs to the CinA family.

The protein is CinA-like protein of Sulfurihydrogenibium sp. (strain YO3AOP1).